Reading from the N-terminus, the 506-residue chain is Lysine--tRNA ligase (506 aa).

Residues Glu416 and Glu423 each coordinate Mg(2+).

The protein belongs to the class-II aminoacyl-tRNA synthetase family. As to quaternary structure, homodimer. Requires Mg(2+) as cofactor.

Its subcellular location is the cytoplasm. It carries out the reaction tRNA(Lys) + L-lysine + ATP = L-lysyl-tRNA(Lys) + AMP + diphosphate. This chain is Lysine--tRNA ligase, found in Sodalis glossinidius (strain morsitans).